Consider the following 215-residue polypeptide: Small ribosomal subunit protein bS6 (215 aa).

Disordered stretches follow at residues 121-153 and 187-215; these read RENN…QKPK and NQRQ…KDKQ. Residues 144-153 show a composition bias toward basic and acidic residues; it reads SRTEKAQKPK. Residues 188 to 198 are compositionally biased toward low complexity; that stretch reads QRQNQQNNNNN. Positions 199–215 are enriched in basic and acidic residues; that stretch reads RFDRNRNRQHNRFKDKQ.

Belongs to the bacterial ribosomal protein bS6 family.

Binds together with bS18 to 16S ribosomal RNA. This is Small ribosomal subunit protein bS6 (rpsF) from Mycoplasma pneumoniae (strain ATCC 29342 / M129 / Subtype 1) (Mycoplasmoides pneumoniae).